The primary structure comprises 417 residues: Histidine--tRNA ligase (417 aa).

Belongs to the class-II aminoacyl-tRNA synthetase family. As to quaternary structure, homodimer.

The protein localises to the cytoplasm. The catalysed reaction is tRNA(His) + L-histidine + ATP = L-histidyl-tRNA(His) + AMP + diphosphate + H(+). The protein is Histidine--tRNA ligase of Oleidesulfovibrio alaskensis (strain ATCC BAA-1058 / DSM 17464 / G20) (Desulfovibrio alaskensis).